We begin with the raw amino-acid sequence, 220 residues long: Octanoyltransferase (220 aa).

Positions 27–208 (PGTADEIWLC…QLARAHGQAV (182 aa)) constitute a BPL/LPL catalytic domain. Residues 66–73 (RGGQVTYH), 139–141 (ALG), and 152–154 (GLA) contribute to the substrate site. The active-site Acyl-thioester intermediate is the Cys-170.

Belongs to the LipB family.

Its subcellular location is the cytoplasm. It catalyses the reaction octanoyl-[ACP] + L-lysyl-[protein] = N(6)-octanoyl-L-lysyl-[protein] + holo-[ACP] + H(+). It participates in protein modification; protein lipoylation via endogenous pathway; protein N(6)-(lipoyl)lysine from octanoyl-[acyl-carrier-protein]: step 1/2. Its function is as follows. Catalyzes the transfer of endogenously produced octanoic acid from octanoyl-acyl-carrier-protein onto the lipoyl domains of lipoate-dependent enzymes. Lipoyl-ACP can also act as a substrate although octanoyl-ACP is likely to be the physiological substrate. The polypeptide is Octanoyltransferase (Bordetella bronchiseptica (strain ATCC BAA-588 / NCTC 13252 / RB50) (Alcaligenes bronchisepticus)).